A 345-amino-acid chain; its full sequence is Protein RecA (345 aa).

65-72 (GPESSGKT) contacts ATP. Residues 326 to 336 (EKFQPAEAARE) are compositionally biased toward basic and acidic residues. The tract at residues 326–345 (EKFQPAEAAREEGDDEGEDE) is disordered.

It belongs to the RecA family.

It is found in the cytoplasm. Can catalyze the hydrolysis of ATP in the presence of single-stranded DNA, the ATP-dependent uptake of single-stranded DNA by duplex DNA, and the ATP-dependent hybridization of homologous single-stranded DNAs. It interacts with LexA causing its activation and leading to its autocatalytic cleavage. The polypeptide is Protein RecA (Stenotrophomonas maltophilia (strain K279a)).